We begin with the raw amino-acid sequence, 81 residues long: Neuronatin (81 aa).

Belongs to the neuronatin family.

May participate in the maintenance of segment identity in the hindbrain and pituitary development, and maturation or maintenance of the overall structure of the nervous system. May function as a regulatory subunit of ion channels. The protein is Neuronatin (NNAT) of Homo sapiens (Human).